We begin with the raw amino-acid sequence, 218 residues long: Superoxide dismutase [Mn], mitochondrial (218 aa).

Mn(2+) contacts are provided by His27, His84, Asp174, and His178.

The protein belongs to the iron/manganese superoxide dismutase family. In terms of assembly, homotetramer. Mn(2+) serves as cofactor.

It is found in the mitochondrion matrix. The enzyme catalyses 2 superoxide + 2 H(+) = H2O2 + O2. In terms of biological role, destroys superoxide anion radicals which are normally produced within the cells and which are toxic to biological systems. The protein is Superoxide dismutase [Mn], mitochondrial (SODA) of Chlamydomonas reinhardtii (Chlamydomonas smithii).